The primary structure comprises 177 residues: MSEFVTVARPYAKAAFDFAVEHQSLDRWQDMLAFAADVTRNEQISELLAGAVAPETLSRTFIAVCGEQLDEHGQNFIRVMAENGRLLVLPAVLQQFIELRALLESTVEVEVLSASALNDKQLANIAAAMEKRLSRKVKLNCKIDKSVLAGVIIRAGDMVIDGSVRGRLERLTDVLQS.

This sequence belongs to the ATPase delta chain family. F-type ATPases have 2 components, F(1) - the catalytic core - and F(0) - the membrane proton channel. F(1) has five subunits: alpha(3), beta(3), gamma(1), delta(1), epsilon(1). F(0) has three main subunits: a(1), b(2) and c(10-14). The alpha and beta chains form an alternating ring which encloses part of the gamma chain. F(1) is attached to F(0) by a central stalk formed by the gamma and epsilon chains, while a peripheral stalk is formed by the delta and b chains.

It is found in the cell inner membrane. In terms of biological role, f(1)F(0) ATP synthase produces ATP from ADP in the presence of a proton or sodium gradient. F-type ATPases consist of two structural domains, F(1) containing the extramembraneous catalytic core and F(0) containing the membrane proton channel, linked together by a central stalk and a peripheral stalk. During catalysis, ATP synthesis in the catalytic domain of F(1) is coupled via a rotary mechanism of the central stalk subunits to proton translocation. This protein is part of the stalk that links CF(0) to CF(1). It either transmits conformational changes from CF(0) to CF(1) or is implicated in proton conduction. This is ATP synthase subunit delta from Serratia proteamaculans (strain 568).